A 2422-amino-acid polypeptide reads, in one-letter code: Interferon-induced very large GTPase 1 (2422 aa).

Residues 945 to 965 form a disordered region; that stretch reads ENFFEDSDSPTKSSSTEPSPH. Over residues 954-963 the composition is skewed to low complexity; it reads PTKSSSTEPS. Positions 1479–1720 constitute a VLIG-type G domain; the sequence is DKRLFVLSIL…KISDVKSRVQ (242 aa). GTP contacts are provided by residues 1489–1496, 1542–1545, and 1619–1622; these read GLQSSGKS, DTEG, and TATD.

This sequence belongs to the TRAFAC class dynamin-like GTPase superfamily. Very large inducible GTPase (VLIG) family.

The protein resides in the cytoplasm. Its subcellular location is the cytosol. It is found in the nucleus. This is Interferon-induced very large GTPase 1 (GVINP1) from Homo sapiens (Human).